We begin with the raw amino-acid sequence, 675 residues long: Methionine--tRNA ligase (675 aa).

The short motif at proline 15–histidine 25 is the 'HIGH' region element. Zn(2+) is bound by residues cysteine 146, cysteine 149, cysteine 159, and cysteine 162. The 'KMSKS' region motif lies at lysine 332–serine 336. Residue lysine 335 coordinates ATP. One can recognise a tRNA-binding domain in the interval aspartate 573–lysine 675.

It belongs to the class-I aminoacyl-tRNA synthetase family. MetG type 1 subfamily. In terms of assembly, homodimer. Requires Zn(2+) as cofactor.

The protein localises to the cytoplasm. It carries out the reaction tRNA(Met) + L-methionine + ATP = L-methionyl-tRNA(Met) + AMP + diphosphate. In terms of biological role, is required not only for elongation of protein synthesis but also for the initiation of all mRNA translation through initiator tRNA(fMet) aminoacylation. The chain is Methionine--tRNA ligase from Serratia proteamaculans (strain 568).